Consider the following 545-residue polypeptide: Inosine-5'-monophosphate dehydrogenase (545 aa).

CBS domains follow at residues 138-194 and 201-258; these read MITD…DYDT and MTKE…PDAT. NAD(+) is bound by residues D295 and 347-349; that span reads GIG. 2 residues coordinate K(+): G349 and G351. S352 contributes to the IMP binding site. Residue C354 participates in K(+) binding. Catalysis depends on C354, which acts as the Thioimidate intermediate. IMP-binding positions include 387–389, 410–411, and 434–438; these read DGG, GG, and YRGMG. The Proton acceptor role is filled by R455. E470 lines the IMP pocket. Positions 524, 525, and 526 each coordinate K(+).

This sequence belongs to the IMPDH/GMPR family. As to quaternary structure, homotetramer. K(+) serves as cofactor.

It carries out the reaction IMP + NAD(+) + H2O = XMP + NADH + H(+). The protein operates within purine metabolism; XMP biosynthesis via de novo pathway; XMP from IMP: step 1/1. Its activity is regulated as follows. Mycophenolic acid (MPA) is a non-competitive inhibitor that prevents formation of the closed enzyme conformation by binding to the same site as the amobile flap. In contrast, mizoribine monophosphate (MZP) is a competitive inhibitor that induces the closed conformation. MPA is a potent inhibitor of mammalian IMPDHs but a poor inhibitor of the bacterial enzymes. MZP is a more potent inhibitor of bacterial IMPDH. Its function is as follows. Catalyzes the conversion of inosine 5'-phosphate (IMP) to xanthosine 5'-phosphate (XMP), the first committed and rate-limiting step in the de novo synthesis of guanine nucleotides, and therefore plays an important role in the regulation of cell growth. The protein is Inosine-5'-monophosphate dehydrogenase of Bifidobacterium longum (strain NCC 2705).